The primary structure comprises 152 residues: Protein SprT-like (152 aa).

The SprT-like domain occupies 7–148; sequence QRLVEEVSLQ…GKCKGKLILI (142 aa). His-67 provides a ligand contact to Zn(2+). Residue Glu-68 is part of the active site. His-71 serves as a coordination point for Zn(2+).

This sequence belongs to the SprT family. Zn(2+) is required as a cofactor.

The protein resides in the cytoplasm. The sequence is that of Protein SprT-like from Bacillus thuringiensis subsp. konkukian (strain 97-27).